We begin with the raw amino-acid sequence, 421 residues long: Gamma-glutamyl phosphate reductase (421 aa).

The protein belongs to the gamma-glutamyl phosphate reductase family.

The protein localises to the cytoplasm. It carries out the reaction L-glutamate 5-semialdehyde + phosphate + NADP(+) = L-glutamyl 5-phosphate + NADPH + H(+). It functions in the pathway amino-acid biosynthesis; L-proline biosynthesis; L-glutamate 5-semialdehyde from L-glutamate: step 2/2. Its function is as follows. Catalyzes the NADPH-dependent reduction of L-glutamate 5-phosphate into L-glutamate 5-semialdehyde and phosphate. The product spontaneously undergoes cyclization to form 1-pyrroline-5-carboxylate. The sequence is that of Gamma-glutamyl phosphate reductase from Pseudomonas aeruginosa (strain UCBPP-PA14).